Consider the following 213-residue polypeptide: A-type ATP synthase subunit D (213 aa).

This sequence belongs to the V-ATPase D subunit family. Has multiple subunits with at least A(3), B(3), C, D, E, F, H, I and proteolipid K(x).

It is found in the cell membrane. In terms of biological role, component of the A-type ATP synthase that produces ATP from ADP in the presence of a proton gradient across the membrane. This chain is A-type ATP synthase subunit D, found in Saccharolobus islandicus (strain L.S.2.15 / Lassen #1) (Sulfolobus islandicus).